The sequence spans 424 residues: Ornithine aminotransferase (424 aa).

At Lys-272 the chain carries N6-(pyridoxal phosphate)lysine. A Glycyl lysine isopeptide (Lys-Gly) (interchain with G-Cter in ubiquitin) cross-link involves residue Lys-390.

Belongs to the class-III pyridoxal-phosphate-dependent aminotransferase family. It depends on pyridoxal 5'-phosphate as a cofactor.

It localises to the cytoplasm. The catalysed reaction is a 2-oxocarboxylate + L-ornithine = L-glutamate 5-semialdehyde + an L-alpha-amino acid. It functions in the pathway amino-acid biosynthesis; L-proline biosynthesis; L-glutamate 5-semialdehyde from L-ornithine: step 1/1. With respect to regulation, by arginine and urea. Catalyzes the transamination of ornithine into L-glutamate gamma-semialdehyde, the second step of arginine degradation. The sequence is that of Ornithine aminotransferase (CAR2) from Saccharomyces cerevisiae (strain ATCC 204508 / S288c) (Baker's yeast).